A 588-amino-acid chain; its full sequence is Putative calcium-binding mitochondrial carrier F55A11.4 (588 aa).

Residues 1 to 14 (MINKNEQTESTSGA) show a composition bias toward polar residues. The tract at residues 1 to 25 (MINKNEQTESTSGAAEQKEDDEEQY) is disordered. 4 EF-hand domains span residues 73 to 108 (EKER…ETPH), 109 to 139 (IPAN…SYVL), 140 to 175 (ENEQ…IGVP), and 176 to 211 (LDDH…YPSS). Residues Asp86, Asp88, Asp90, Thr92, and Asp97 each contribute to the Ca(2+) site. Ca(2+) contacts are provided by Asp153, Asn155, Asp157, and Glu164. 3 Solcar repeats span residues 246–332 (GIWW…LKRL), 342–428 (ISTF…LKRT), and 440–529 (PGVL…VRTG). 6 consecutive transmembrane segments (helical) span residues 252 to 269 (LVAG…TAPF), 307 to 326 (GNGI…FMCY), 352 to 365 (SAAG…IYPM), 403 to 422 (GYLP…LAIY), 446 to 463 (LACG…SYPF), and 504 to 523 (GITP…YVVY).

Belongs to the mitochondrial carrier (TC 2.A.29) family. As to quaternary structure, homodimer (via N-terminus).

Its subcellular location is the mitochondrion inner membrane. Functionally, mitochondrial and calcium-binding carrier that catalyzes the calcium-dependent exchange of cytoplasmic glutamate with mitochondrial aspartate across the mitochondrial inner membrane. The chain is Putative calcium-binding mitochondrial carrier F55A11.4 from Caenorhabditis elegans.